Reading from the N-terminus, the 1399-residue chain is DNA-directed RNA polymerase subunit beta' (1399 aa).

Cysteine 70, cysteine 72, cysteine 85, and cysteine 88 together coordinate Zn(2+). Mg(2+) is bound by residues aspartate 460, aspartate 462, and aspartate 464. Zn(2+) is bound by residues cysteine 814, cysteine 888, cysteine 895, and cysteine 898.

This sequence belongs to the RNA polymerase beta' chain family. As to quaternary structure, the RNAP catalytic core consists of 2 alpha, 1 beta, 1 beta' and 1 omega subunit. When a sigma factor is associated with the core the holoenzyme is formed, which can initiate transcription. Mg(2+) serves as cofactor. Zn(2+) is required as a cofactor.

It carries out the reaction RNA(n) + a ribonucleoside 5'-triphosphate = RNA(n+1) + diphosphate. In terms of biological role, DNA-dependent RNA polymerase catalyzes the transcription of DNA into RNA using the four ribonucleoside triphosphates as substrates. The sequence is that of DNA-directed RNA polymerase subunit beta' from Pseudomonas putida (strain ATCC 47054 / DSM 6125 / CFBP 8728 / NCIMB 11950 / KT2440).